We begin with the raw amino-acid sequence, 774 residues long: Cilium assembly protein DZIP1L (774 aa).

The segment at 166–189 (HTCHLCDKTFMNATFLRGHIQRRH) adopts a C2H2-type zinc-finger fold. Positions 204 to 450 (LGEVLEELRA…RKVLAALRKN (247 aa)) form a coiled coil. Disordered regions lie at residues 415–435 (MPKAVATEEDSSEEELEASLE), 515–674 (NKEV…ASSG), and 686–774 (KQLE…IPGW). Residues 421 to 433 (TEEDSSEEELEAS) show a composition bias toward acidic residues. Phosphoserine is present on residues Ser425 and Ser426. Positions 515-526 (NKEVSSRVKQRW) are enriched in basic and acidic residues. Residues 597–616 (GPSSTPVSPGSGLSSTPPFS) are compositionally biased toward low complexity.

Belongs to the DZIP C2H2-type zinc-finger protein family. As to quaternary structure, interacts with SEPTIN2.

Its subcellular location is the cytoplasm. It is found in the cytoskeleton. It localises to the cilium basal body. The protein resides in the microtubule organizing center. The protein localises to the centrosome. Its subcellular location is the centriole. In terms of biological role, involved in primary cilium formation. Probably acts as a transition zone protein required for localization of PKD1/PC1 and PKD2/PC2 to the ciliary membrane. The polypeptide is Cilium assembly protein DZIP1L (Mus musculus (Mouse)).